The following is a 383-amino-acid chain: Probable sphingolipid long chain base-responsive protein pil2 (383 aa).

Residue Ser-162 is modified to Phosphoserine. 2 disordered regions span residues 292–336 (PRTD…EDYQ) and 356–383 (GEEDDEEVGSQGVAETSMPSTSAQPIAA). Positions 311–324 (TTSGTTHSYTSTGS) are enriched in low complexity. Polar residues-rich tracts occupy residues 325–336 (KRYSQMGTEDYQ) and 368–383 (VAETSMPSTSAQPIAA).

In terms of processing, phosphorylated by ksg1 and ppk21. Phosphorylation is regulated by sphingolipid long chain bases (LCBs).

In terms of biological role, negative regulator of cell wall integrity (CWI) in unstressed cells, probably by inhibiting protein kinase ksg1/ppk21 activity and regulating their downstream CWI pathways pck2-MAP kinase pathway and protein kinase gad8 pathway. Activity may be regulated by the transient increase of sphingolipid long chain bases (LCBs) during heat stress. The chain is Probable sphingolipid long chain base-responsive protein pil2 (pil2) from Schizosaccharomyces pombe (strain 972 / ATCC 24843) (Fission yeast).